The following is a 354-amino-acid chain: Uroporphyrinogen decarboxylase (354 aa).

Residues 27 to 31, Asp-77, Tyr-154, Ser-209, and His-327 each bind substrate; that span reads RQAGR.

Belongs to the uroporphyrinogen decarboxylase family. In terms of assembly, homodimer.

The protein localises to the cytoplasm. It catalyses the reaction uroporphyrinogen III + 4 H(+) = coproporphyrinogen III + 4 CO2. It participates in porphyrin-containing compound metabolism; protoporphyrin-IX biosynthesis; coproporphyrinogen-III from 5-aminolevulinate: step 4/4. In terms of biological role, catalyzes the decarboxylation of four acetate groups of uroporphyrinogen-III to yield coproporphyrinogen-III. The chain is Uroporphyrinogen decarboxylase from Shewanella sp. (strain ANA-3).